We begin with the raw amino-acid sequence, 507 residues long: MVTIRADEISNIIRERIEQYNREVKIVNTGTVLQVGDGIARIHGLDEVMAGELVEFEEGTIGIALNLESNNVGVVLMGDGLLIQEGSSVKATGRIAQIPVSEAYLGRVINALAKPIDGRGEISASEFRLIESAAPGIISRRSVYEPLQTGLIAIDSMIPIGRGQRELIIGDRQTGKTAVATDTILNQQGQNVICVYVAIGQKASSVAQVVTTLQERGAMEYTIVVAETADSPATLQYLAPYTGAALAEYFMYRERHTLIIYDDLSKQAQAYRQMSLLLRRPPGREAYLGDVFYLHSRLLERAAKLSSSLGEGSMTALPIVETQSGDVSAYIPTNVISITDGQIFLSADLFNSGIRPAINVGISVSRVGSAAQIKAMKQVAGKLKLELAQFAELEAFAQFASDLDKATQNQLARGQRLRELLKQSQSAPLTVEEQIMTIYTGTNGYLDSLEVGQVRKFLVELRTYLKTNKPQFQEIISSTKTFTEEAEALLKEAIQEQMDRFILQEQA.

170–177 is a binding site for ATP; that stretch reads GDRQTGKT.

The protein belongs to the ATPase alpha/beta chains family. As to quaternary structure, F-type ATPases have 2 components, CF(1) - the catalytic core - and CF(0) - the membrane proton channel. CF(1) has five subunits: alpha(3), beta(3), gamma(1), delta(1), epsilon(1). CF(0) has four main subunits: a, b, b' and c.

It localises to the plastid. Its subcellular location is the chloroplast thylakoid membrane. It carries out the reaction ATP + H2O + 4 H(+)(in) = ADP + phosphate + 5 H(+)(out). Functionally, produces ATP from ADP in the presence of a proton gradient across the membrane. The alpha chain is a regulatory subunit. The chain is ATP synthase subunit alpha, chloroplastic from Nicotiana tabacum (Common tobacco).